The primary structure comprises 85 residues: MSEEYLQSDLARAIETHSIESVENLNKSETVFYICDVLGVEPPEAHPSEHNGTVPRSLSQEWAKILAEEAEENSEENNDESEEDN.

Residues 44–85 are disordered; sequence EAHPSEHNGTVPRSLSQEWAKILAEEAEENSEENNDESEEDN. Polar residues predominate over residues 50 to 60; it reads HNGTVPRSLSQ. The span at 68-85 shows a compositional bias: acidic residues; sequence EEAEENSEENNDESEEDN.

This is an uncharacterized protein from Haloarcula hispanica (His1V).